The chain runs to 303 residues: MSATPTVPITFQGLIQTLNQFWAQQGCVLIQPLDLEVGAGTFHPATFLRAIGPESWNAAYVQPSRRPTDGRYGENPNRLQRYYQYQVAMKPAPDNIQQLYLDSLKALGIDPLVHDLRFVEDNWESPTLGAWGLGWEVWLNGMEVTQFTYFQQAGGLECRPVLGEITYGLERLCMYLQNCDNVYDLVWTYGPDGQPVTYGDVYHQNEVEQSTYNFEYADVEEMFHRFDACEREAQKLVEVNLPLPAYEQVMKASHTFNLLDARRAISVTERQRYILRVRALAQAVAKAYYEQREKLGFPGAKKA.

Belongs to the class-II aminoacyl-tRNA synthetase family. As to quaternary structure, tetramer of two alpha and two beta subunits.

It is found in the cytoplasm. The enzyme catalyses tRNA(Gly) + glycine + ATP = glycyl-tRNA(Gly) + AMP + diphosphate. The polypeptide is Glycine--tRNA ligase alpha subunit (Stenotrophomonas maltophilia (strain R551-3)).